A 356-amino-acid chain; its full sequence is MQETALLERESAGTGNAPVRTDWTREEIAALFDLPFTELLFRAAEVHRAHHRAGEVQLCTLLSIKTGGCPEDCGYCSQSVKADSGVEATKLMEVQKVLQSAAQAKDNGSKRFCMGAAWRNPKDRDMPAIISMIKGVREMGMETCMTLGMLTPSQAAQLADAGLDYYNHNIDTSPERYEEVITTRTFADRLQTLDNVRNAGINVCSGGIVGMGETRADRVGFVHALATLEQHPESVPVNALVPIKGTVLGDMLADTPLAKIDDIEFVRTVAVARITMPLSMVRLSAGRESMSEATQALCFMAGANSIFTGDKLLTAANAGDDADAAMFKRLGLKPMEGEEPMRAMKSVGGCSGGCAA.

The Radical SAM core domain occupies 54-278 (GEVQLCTLLS…VAVARITMPL (225 aa)). Positions 69, 73, and 76 each coordinate [4Fe-4S] cluster. Residues cysteine 113, cysteine 144, cysteine 204, and arginine 282 each contribute to the [2Fe-2S] cluster site.

Belongs to the radical SAM superfamily. Biotin synthase family. In terms of assembly, homodimer. It depends on [4Fe-4S] cluster as a cofactor. Requires [2Fe-2S] cluster as cofactor.

It carries out the reaction (4R,5S)-dethiobiotin + (sulfur carrier)-SH + 2 reduced [2Fe-2S]-[ferredoxin] + 2 S-adenosyl-L-methionine = (sulfur carrier)-H + biotin + 2 5'-deoxyadenosine + 2 L-methionine + 2 oxidized [2Fe-2S]-[ferredoxin]. It participates in cofactor biosynthesis; biotin biosynthesis; biotin from 7,8-diaminononanoate: step 2/2. Functionally, catalyzes the conversion of dethiobiotin (DTB) to biotin by the insertion of a sulfur atom into dethiobiotin via a radical-based mechanism. In Novosphingobium aromaticivorans (strain ATCC 700278 / DSM 12444 / CCUG 56034 / CIP 105152 / NBRC 16084 / F199), this protein is Biotin synthase.